A 486-amino-acid chain; its full sequence is Bifunctional protein HldE (486 aa).

The segment at 1-329 (MSSRLSGLLD…AALSVAGPVG (329 aa)) is ribokinase. 204 to 207 (NAFE) serves as a coordination point for ATP. D274 is a catalytic residue. Positions 355–486 (FTNGCFDILH…AIIARSETGK (132 aa)) are cytidylyltransferase.

The protein in the N-terminal section; belongs to the carbohydrate kinase PfkB family. It in the C-terminal section; belongs to the cytidylyltransferase family. Homodimer.

The enzyme catalyses D-glycero-beta-D-manno-heptose 7-phosphate + ATP = D-glycero-beta-D-manno-heptose 1,7-bisphosphate + ADP + H(+). It catalyses the reaction D-glycero-beta-D-manno-heptose 1-phosphate + ATP + H(+) = ADP-D-glycero-beta-D-manno-heptose + diphosphate. Its pathway is nucleotide-sugar biosynthesis; ADP-L-glycero-beta-D-manno-heptose biosynthesis; ADP-L-glycero-beta-D-manno-heptose from D-glycero-beta-D-manno-heptose 7-phosphate: step 1/4. It functions in the pathway nucleotide-sugar biosynthesis; ADP-L-glycero-beta-D-manno-heptose biosynthesis; ADP-L-glycero-beta-D-manno-heptose from D-glycero-beta-D-manno-heptose 7-phosphate: step 3/4. Functionally, catalyzes the phosphorylation of D-glycero-D-manno-heptose 7-phosphate at the C-1 position to selectively form D-glycero-beta-D-manno-heptose-1,7-bisphosphate. Catalyzes the ADP transfer from ATP to D-glycero-beta-D-manno-heptose 1-phosphate, yielding ADP-D-glycero-beta-D-manno-heptose. This Hyphomonas neptunium (strain ATCC 15444) protein is Bifunctional protein HldE.